We begin with the raw amino-acid sequence, 280 residues long: Thioesterase pynI (280 aa).

A compositionally biased stretch (acidic residues) spans Leu-136 to Asn-145. Residues Leu-136 to Asp-167 form a disordered region.

This sequence belongs to the AMT4 thioesterase family.

Its pathway is secondary metabolite biosynthesis. In terms of biological role, thioesterase; part of the gene cluster that mediates the biosynthesis of pyranonigrins, a family of antioxidative compounds. The first step of pyranonigrins biosynthesis is performed by the hybrid PKS-NRPS synthetase that condenses 6 malonyl-CoA units to an acetyl starter unit, to form a 1,3,5-trioxotetradecane-6,8-dienyl-ACP. The enoyl reductase (ER) domain of pynA is likely to be functional during the first two rounds of polyketide chain extension, to generate the saturated C-C bonds of the alkyl side chain. PynA subsequently forms the amide bond between the acyl chain and L-serine. Although pynA has a terminal reductase domain, it appears to require the thioesterase pynI for the release of the straight-chain intermediate from pynA via the formation of a tetramic acid pyranonigrin J. The methyltransferase pynC then coverts pyranonigrin J to pyranonigrin I via N-methylation. The FAD-dependent monooxygenase pynG catalyzes an epoxidation-mediated cyclization to form the dihydro-gamma-pyrone moiety, followed by pynD-catalyzed oxidation of the alcohol to the ketone and enolization to yield the characteristic tetramic acid-fused gamma-pyrone core of pyranonigrin H. Pyranonigrin H is substrate of pynH for dehydration-mediated exo-methylene formation from the serine side chain to produce pyranonigrin E, before the oxidase pynE reduces the exo-methylene of pyranonigrin E into a pendant methyl to form pyranonigrin G. The FAD-linked oxidoreductase pynB performs the reverse reaction and converts pyranonigrin G back to pyranonigrin E. The chain is Thioesterase pynI from Aspergillus niger (strain ATCC MYA-4892 / CBS 513.88 / FGSC A1513).